The sequence spans 302 residues: Sulfate adenylyltransferase subunit 2 (302 aa).

Belongs to the PAPS reductase family. CysD subfamily. As to quaternary structure, heterodimer composed of CysD, the smaller subunit, and CysN.

The enzyme catalyses sulfate + ATP + H(+) = adenosine 5'-phosphosulfate + diphosphate. The protein operates within sulfur metabolism; hydrogen sulfide biosynthesis; sulfite from sulfate: step 1/3. In terms of biological role, with CysN forms the ATP sulfurylase (ATPS) that catalyzes the adenylation of sulfate producing adenosine 5'-phosphosulfate (APS) and diphosphate, the first enzymatic step in sulfur assimilation pathway. APS synthesis involves the formation of a high-energy phosphoric-sulfuric acid anhydride bond driven by GTP hydrolysis by CysN coupled to ATP hydrolysis by CysD. This chain is Sulfate adenylyltransferase subunit 2, found in Zymomonas mobilis subsp. mobilis (strain ATCC 31821 / ZM4 / CP4).